The primary structure comprises 648 residues: Fidgetin-like protein 2 (648 aa).

The interval 1–36 is disordered; the sequence is MHWTPEHAQPLNQWPEQHLDVSSTTPSPAHKLELPP. Residues 10-27 show a composition bias toward polar residues; it reads PLNQWPEQHLDVSSTTPS. ATP is bound by residues Ala394 and 434–439; that span reads GCGKAL.

The protein belongs to the AAA ATPase family. Mg(2+) is required as a cofactor.

Its subcellular location is the cytoplasm. The protein localises to the cell cortex. It catalyses the reaction ATP + H2O = ADP + phosphate + H(+). Microtubule-severing enzyme that negatively regulates cell migration and wound healing. In migrating cells, targets dynamic microtubules (MTs) at the leading edge and severs them, thereby suppressing motility. Microtubule severing releases ARHGEF2 which activates RHOA, which in turn regulates focal ahesion turnover via focal adhesion kinase, as opposed to F-actin polymerization, to suppress cell motility. Negative regulator of axon regeneration that suppresses axonal growth by selectively severing dynamic MTs in the distal axon shaft and growth cone. Contributes to proper cell branching during endothelial and neuronal development. This is Fidgetin-like protein 2 (Fignl2) from Rattus norvegicus (Rat).